A 544-amino-acid chain; its full sequence is Prolyl 4-hydroxylase subunit alpha-3 (544 aa).

An N-terminal signal peptide occupies residues 1–19 (MGPGARLAALLAVLALGTG). Residues 107–131 (LEASENIRALKDGYEKVEQDLPAFE) adopt a coiled-coil conformation. The TPR repeat unit spans residues 227–260 (EDALDHLAFAYFRAGNVSCALSLSREFLLYSPDN). Residue Asn242 is glycosylated (N-linked (GlcNAc...) asparagine). In terms of domain architecture, Fe2OG dioxygenase spans 422–529 (YAEYLQVVNY…KWVANKWIHE (108 aa)). Fe cation-binding residues include His440 and Asp442. N-linked (GlcNAc...) asparagine glycosylation is present at Asn482. His510 contributes to the Fe cation binding site. Lys520 is a 2-oxoglutarate binding site.

It belongs to the P4HA family. Heterotetramer of two alpha-3 chains and two beta chains (the beta chain is the multi-functional PDI). Requires Fe(2+) as cofactor. L-ascorbate serves as cofactor. N-glycosylation plays no role in the catalytic activity. Highly expressed in placenta, liver and fetal skin. Weakly expressed in fetal epiphyseal cartilage, fetal liver, fibroblast, lung and skeletal muscle. Expressed also in fibrous cap of carotid atherosclerotic lesions.

The protein resides in the endoplasmic reticulum lumen. The catalysed reaction is L-prolyl-[collagen] + 2-oxoglutarate + O2 = trans-4-hydroxy-L-prolyl-[collagen] + succinate + CO2. Functionally, catalyzes the post-translational formation of 4-hydroxyproline in -Xaa-Pro-Gly- sequences in collagens and other proteins. The polypeptide is Prolyl 4-hydroxylase subunit alpha-3 (P4HA3) (Homo sapiens (Human)).